Consider the following 243-residue polypeptide: Urease accessory protein UreF (243 aa).

Belongs to the UreF family. In terms of assembly, ureD, UreF and UreG form a complex that acts as a GTP-hydrolysis-dependent molecular chaperone, activating the urease apoprotein by helping to assemble the nickel containing metallocenter of UreC. The UreE protein probably delivers the nickel.

Its subcellular location is the cytoplasm. Functionally, required for maturation of urease via the functional incorporation of the urease nickel metallocenter. In Rhodopseudomonas palustris (strain BisB5), this protein is Urease accessory protein UreF.